A 459-amino-acid chain; its full sequence is NADH-ubiquinone oxidoreductase chain 4 (459 aa).

13 helical membrane passes run 22–42 (MIWINTTTHSLIISIIPLLFF), 60–80 (PLTTPLLMLTTWLLPLTIMAS), 94–112 (LYLSMLISLQISLIMTFTA), 113–133 (TELIMFYIFFEATLIPTLVII), 145–165 (AGTYFLFYTLVGSLPLLIALI), 196–216 (WLAYTMAFMVKMPLYGLHLWL), 224–244 (PIAGSMMLAAVLLKLGGYGMM), 257–277 (MAYPFLALSLWGMIMTSSISL), 284–303 (SLIAYSSISHMALVVAAILI), 308–330 (SFTGAVVLMIAHGLTSSLLFCLA), 351–371 (LLPLMALWWLLASLANLALPP), 391–411 (TTLLLTGSNMLITALYSLYMF), and 435–455 (ILMFMHLSPILLLSLNPDIIT).

The protein belongs to the complex I subunit 4 family. In terms of assembly, core subunit of respiratory chain NADH dehydrogenase (Complex I) which is composed of 45 different subunits.

It localises to the mitochondrion inner membrane. It catalyses the reaction a ubiquinone + NADH + 5 H(+)(in) = a ubiquinol + NAD(+) + 4 H(+)(out). Functionally, core subunit of the mitochondrial membrane respiratory chain NADH dehydrogenase (Complex I) which catalyzes electron transfer from NADH through the respiratory chain, using ubiquinone as an electron acceptor. Essential for the catalytic activity and assembly of complex I. This Gorilla gorilla gorilla (Western lowland gorilla) protein is NADH-ubiquinone oxidoreductase chain 4 (MT-ND4).